Consider the following 429-residue polypeptide: S-adenosylmethionine synthase (429 aa).

H14 is a binding site for ATP. D16 lines the Mg(2+) pocket. Position 42 (E42) interacts with K(+). L-methionine is bound by residues E55 and Q98. Residues 98-108 (QSADINRGVDR) are flexible loop. Residues 165-167 (DAK), 252-253 (KF), D261, 267-268 (RK), A284, and K288 each bind ATP. D261 contributes to the L-methionine binding site. K292 serves as a coordination point for L-methionine.

It belongs to the AdoMet synthase family. In terms of assembly, homotetramer; dimer of dimers. It depends on Mg(2+) as a cofactor. Requires K(+) as cofactor.

Its subcellular location is the cytoplasm. It catalyses the reaction L-methionine + ATP + H2O = S-adenosyl-L-methionine + phosphate + diphosphate. The protein operates within amino-acid biosynthesis; S-adenosyl-L-methionine biosynthesis; S-adenosyl-L-methionine from L-methionine: step 1/1. In terms of biological role, catalyzes the formation of S-adenosylmethionine (AdoMet) from methionine and ATP. The overall synthetic reaction is composed of two sequential steps, AdoMet formation and the subsequent tripolyphosphate hydrolysis which occurs prior to release of AdoMet from the enzyme. The polypeptide is S-adenosylmethionine synthase (Porphyromonas gingivalis (strain ATCC 33277 / DSM 20709 / CIP 103683 / JCM 12257 / NCTC 11834 / 2561)).